A 334-amino-acid polypeptide reads, in one-letter code: Tryptophan--tRNA ligase (334 aa).

ATP-binding positions include 11 to 13 and 19 to 20; these read QPS and GN. Positions 12–20 match the 'HIGH' region motif; that stretch reads PSGELTIGN. Asp-135 lines the L-tryptophan pocket. Residues 147–149, Val-186, and 195–199 each bind ATP; these read GED and KMSKS. Positions 195–199 match the 'KMSKS' region motif; the sequence is KMSKS.

It belongs to the class-I aminoacyl-tRNA synthetase family. In terms of assembly, homodimer.

The protein resides in the cytoplasm. It carries out the reaction tRNA(Trp) + L-tryptophan + ATP = L-tryptophyl-tRNA(Trp) + AMP + diphosphate + H(+). Catalyzes the attachment of tryptophan to tRNA(Trp). The chain is Tryptophan--tRNA ligase from Shigella flexneri.